We begin with the raw amino-acid sequence, 400 residues long: Homoserine O-acetyltransferase (400 aa).

In terms of domain architecture, AB hydrolase-1 spans 64–373 (NAILICHALT…TDRGHDAFLL (310 aa)). Residue Ser169 is the Nucleophile of the active site. A substrate-binding site is contributed by Arg239. Active-site residues include Asp335 and His368. Asp369 serves as a coordination point for substrate.

The protein belongs to the AB hydrolase superfamily. MetX family. Homodimer.

Its subcellular location is the cytoplasm. The enzyme catalyses L-homoserine + acetyl-CoA = O-acetyl-L-homoserine + CoA. The protein operates within amino-acid biosynthesis; L-methionine biosynthesis via de novo pathway; O-acetyl-L-homoserine from L-homoserine: step 1/1. Its function is as follows. Transfers an acetyl group from acetyl-CoA to L-homoserine, forming acetyl-L-homoserine. The chain is Homoserine O-acetyltransferase from Bradyrhizobium diazoefficiens (strain JCM 10833 / BCRC 13528 / IAM 13628 / NBRC 14792 / USDA 110).